The sequence spans 469 residues: Interstitial collagenase (469 aa).

Residues 1–18 form the signal peptide; sequence MLSLPLLLLLLWGMGSHS. Residues 19-99 constitute a propeptide, activation peptide; sequence FPTVPSETRE…PRCGVPDVAE (81 aa). The Cysteine switch signature appears at 90 to 97; it reads PRCGVPDV. Cysteine 92 is a Zn(2+) binding site. Residues aspartate 124 and aspartate 158 each coordinate Ca(2+). Zn(2+)-binding residues include histidine 168 and aspartate 170. Residues aspartate 175, glycine 176, glycine 178, and asparagine 180 each contribute to the Ca(2+) site. Residue histidine 183 participates in Zn(2+) binding. Ca(2+) is bound by residues arginine 190, glycine 192, and aspartate 194. Histidine 196 is a Zn(2+) binding site. Aspartate 198, glutamate 199, and glutamate 201 together coordinate Ca(2+). Histidine 218 lines the Zn(2+) pocket. Glutamate 219 is an active-site residue. 2 residues coordinate Zn(2+): histidine 222 and histidine 228. Threonine 274 bears the Phosphothreonine mark. 4 Hemopexin repeats span residues 275-324, 325-371, 374-422, and 423-466; these read PEVC…WPQL, PNGL…FGFP, VKNI…FPGI, and GDKV…WFNC. Cysteines 278 and 466 form a disulfide. Residues aspartate 285 and glutamine 329 each coordinate Ca(2+). Tyrosine 360 carries the phosphotyrosine; by PKDCC modification. Residues aspartate 378 and aspartate 427 each contribute to the Ca(2+) site.

Belongs to the peptidase M10A family. It depends on Ca(2+) as a cofactor. Zn(2+) serves as cofactor. In terms of processing, tyrosine phosphorylated in platelets by PKDCC/VLK.

The protein localises to the secreted. It is found in the extracellular space. It localises to the extracellular matrix. The catalysed reaction is Cleavage of the triple helix of collagen at about three-quarters of the length of the molecule from the N-terminus, at 775-Gly-|-Ile-776 in the alpha1(I) chain. Cleaves synthetic substrates and alpha-macroglobulins at bonds where P1' is a hydrophobic residue.. Can be activated without removal of the activation peptide. In terms of biological role, cleaves collagens of types I, II, and III at one site in the helical domain. Also cleaves collagens of types VII and X. This is Interstitial collagenase (MMP1) from Equus caballus (Horse).